A 297-amino-acid chain; its full sequence is Ribosomal RNA small subunit methyltransferase A (297 aa).

Residues asparagine 28, leucine 30, glycine 55, glutamate 76, aspartate 101, and asparagine 126 each contribute to the S-adenosyl-L-methionine site.

It belongs to the class I-like SAM-binding methyltransferase superfamily. rRNA adenine N(6)-methyltransferase family. RsmA subfamily.

It is found in the cytoplasm. The catalysed reaction is adenosine(1518)/adenosine(1519) in 16S rRNA + 4 S-adenosyl-L-methionine = N(6)-dimethyladenosine(1518)/N(6)-dimethyladenosine(1519) in 16S rRNA + 4 S-adenosyl-L-homocysteine + 4 H(+). In terms of biological role, specifically dimethylates two adjacent adenosines (A1518 and A1519) in the loop of a conserved hairpin near the 3'-end of 16S rRNA in the 30S particle. May play a critical role in biogenesis of 30S subunits. The sequence is that of Ribosomal RNA small subunit methyltransferase A from Latilactobacillus sakei subsp. sakei (strain 23K) (Lactobacillus sakei subsp. sakei).